Reading from the N-terminus, the 744-residue chain is Eukaryotic translation initiation factor 3 subunit B (744 aa).

Positions 1–20 (MAPSFDHLPDPEEDEYDEEE) are disordered. Acidic residues predominate over residues 11–20 (PEEDEYDEEE). The 87-residue stretch at 40-126 (TFVVIDGLPE…HTLRVNKLTD (87 aa)) folds into the RRM domain. 4 WD repeats span residues 193 to 232 (DRQH…RQKR), 234 to 290 (AHPF…PLRS), 307 to 348 (PVKR…LLDK), and 577 to 622 (ADHY…LREE). Positions 699–714 (EREDAGLPRDPLEPLK) are enriched in basic and acidic residues. Residues 699–722 (EREDAGLPRDPLEPLKSKMASGDE) are disordered.

It belongs to the eIF-3 subunit B family. As to quaternary structure, component of the eukaryotic translation initiation factor 3 (eIF-3) complex.

It localises to the cytoplasm. RNA-binding component of the eukaryotic translation initiation factor 3 (eIF-3) complex, which is involved in protein synthesis of a specialized repertoire of mRNAs and, together with other initiation factors, stimulates binding of mRNA and methionyl-tRNAi to the 40S ribosome. The eIF-3 complex specifically targets and initiates translation of a subset of mRNAs involved in cell proliferation. This Sclerotinia sclerotiorum (strain ATCC 18683 / 1980 / Ss-1) (White mold) protein is Eukaryotic translation initiation factor 3 subunit B (prt1).